We begin with the raw amino-acid sequence, 246 residues long: 3'(2'),5'-bisphosphate nucleotidase CysQ (246 aa).

5 residues coordinate Mg(2+): E64, D83, L85, D86, and D205. Residue E64 participates in substrate binding. Substrate is bound by residues 85-88 (LDGT) and D205.

The protein belongs to the inositol monophosphatase superfamily. CysQ family. It depends on Mg(2+) as a cofactor.

It is found in the cell inner membrane. The catalysed reaction is adenosine 3',5'-bisphosphate + H2O = AMP + phosphate. In terms of biological role, converts adenosine-3',5'-bisphosphate (PAP) to AMP. The protein is 3'(2'),5'-bisphosphate nucleotidase CysQ of Salmonella typhimurium (strain LT2 / SGSC1412 / ATCC 700720).